The chain runs to 399 residues: Elongation factor Tu (399 aa).

The tr-type G domain maps to 10-204 (KPHVNIGTIG…AVDASIPEPE (195 aa)). The interval 19–26 (GHVDHGKT) is G1. 19–26 (GHVDHGKT) lines the GTP pocket. A Mg(2+)-binding site is contributed by Thr-26. Positions 60–64 (GITIN) are G2. The G3 stretch occupies residues 81-84 (DCPG). GTP contacts are provided by residues 81–85 (DCPGH) and 136–139 (NKCD). Residues 136 to 139 (NKCD) form a G4 region. A G5 region spans residues 174-176 (SGL).

It belongs to the TRAFAC class translation factor GTPase superfamily. Classic translation factor GTPase family. EF-Tu/EF-1A subfamily. Monomer.

Its subcellular location is the cytoplasm. The catalysed reaction is GTP + H2O = GDP + phosphate + H(+). In terms of biological role, GTP hydrolase that promotes the GTP-dependent binding of aminoacyl-tRNA to the A-site of ribosomes during protein biosynthesis. This Synechococcus sp. (strain CC9311) protein is Elongation factor Tu.